A 103-amino-acid polypeptide reads, in one-letter code: Cell division protein FtsB (103 aa).

At 1-3 (MGK) the chain is on the cytoplasmic side. A helical membrane pass occupies residues 4-21 (LTLLLLALLVWLQYSLWF). The Periplasmic portion of the chain corresponds to 22-103 (GKNGIHDYSR…RAGGPAQNNR (82 aa)). Positions 38-62 (VQQATNAKLKARNDQLFAEIDDLNG) form a coiled coil.

Belongs to the FtsB family. Part of a complex composed of FtsB, FtsL and FtsQ.

Its subcellular location is the cell inner membrane. Its function is as follows. Essential cell division protein. May link together the upstream cell division proteins, which are predominantly cytoplasmic, with the downstream cell division proteins, which are predominantly periplasmic. The chain is Cell division protein FtsB from Cronobacter sakazakii (strain ATCC BAA-894) (Enterobacter sakazakii).